The sequence spans 268 residues: Ubiquinone biosynthesis protein COQ4 homolog, mitochondrial (268 aa).

Zn(2+) contacts are provided by His171, Asp172, His175, and Glu187.

It belongs to the COQ4 family. As to quaternary structure, component of a multi-subunit COQ enzyme complex. Zn(2+) serves as cofactor.

It localises to the mitochondrion inner membrane. The catalysed reaction is a 4-hydroxy-3-methoxy-5-(all-trans-polyprenyl)benzoate + H(+) = a 2-methoxy-6-(all-trans-polyprenyl)phenol + CO2. The protein operates within cofactor biosynthesis; ubiquinone biosynthesis. Functionally, lyase that catalyzes the C1-decarboxylation of 4-hydroxy-3-methoxy-5-(all-trans-polyprenyl)benzoic acid into 2-methoxy-6-(all-trans-polyprenyl)phenol during ubiquinone biosynthesis. The protein is Ubiquinone biosynthesis protein COQ4 homolog, mitochondrial of Drosophila yakuba (Fruit fly).